Here is a 568-residue protein sequence, read N- to C-terminus: DNA ligase 2 (568 aa).

Residue Glu254 participates in ATP binding. The N6-AMP-lysine intermediate role is filled by Lys256. Residues Arg261, Arg276, Glu306, Phe346, Arg425, and Lys431 each coordinate ATP.

Belongs to the ATP-dependent DNA ligase family. Requires Mg(2+) as cofactor.

The catalysed reaction is ATP + (deoxyribonucleotide)n-3'-hydroxyl + 5'-phospho-(deoxyribonucleotide)m = (deoxyribonucleotide)n+m + AMP + diphosphate.. DNA ligase that seals nicks in double-stranded DNA during DNA replication, DNA recombination and DNA repair. This Methanosarcina acetivorans (strain ATCC 35395 / DSM 2834 / JCM 12185 / C2A) protein is DNA ligase 2.